The following is a 263-amino-acid chain: Orotidine 5'-phosphate decarboxylase (263 aa).

Substrate-binding positions include Asp36, 58 to 60, 90 to 99, Tyr216, and Arg234; these read KTH and DRKFADIGNT. Lys92 (proton donor) is an active-site residue.

The protein belongs to the OMP decarboxylase family.

The enzyme catalyses orotidine 5'-phosphate + H(+) = UMP + CO2. It functions in the pathway pyrimidine metabolism; UMP biosynthesis via de novo pathway; UMP from orotate: step 2/2. The protein is Orotidine 5'-phosphate decarboxylase (URA3) of Komagataella pastoris (Yeast).